We begin with the raw amino-acid sequence, 247 residues long: Ribonuclease PH (247 aa).

Phosphate contacts are provided by residues Arg90 and 128 to 130 (GTR).

It belongs to the RNase PH family. Homohexameric ring arranged as a trimer of dimers.

The catalysed reaction is tRNA(n+1) + phosphate = tRNA(n) + a ribonucleoside 5'-diphosphate. In terms of biological role, phosphorolytic 3'-5' exoribonuclease that plays an important role in tRNA 3'-end maturation. Removes nucleotide residues following the 3'-CCA terminus of tRNAs; can also add nucleotides to the ends of RNA molecules by using nucleoside diphosphates as substrates, but this may not be physiologically important. Probably plays a role in initiation of 16S rRNA degradation (leading to ribosome degradation) during starvation. The chain is Ribonuclease PH from Synechococcus sp. (strain CC9605).